The chain runs to 612 residues: Dihydroxy-acid dehydratase (612 aa).

Mg(2+) is bound at residue aspartate 81. Cysteine 122 lines the [2Fe-2S] cluster pocket. Mg(2+)-binding residues include aspartate 123 and lysine 124. Position 124 is an N6-carboxylysine (lysine 124). Residue cysteine 193 participates in [2Fe-2S] cluster binding. Glutamate 489 contributes to the Mg(2+) binding site. Serine 515 serves as the catalytic Proton acceptor.

This sequence belongs to the IlvD/Edd family. In terms of assembly, homodimer. The cofactor is [2Fe-2S] cluster. It depends on Mg(2+) as a cofactor.

It carries out the reaction (2R)-2,3-dihydroxy-3-methylbutanoate = 3-methyl-2-oxobutanoate + H2O. The enzyme catalyses (2R,3R)-2,3-dihydroxy-3-methylpentanoate = (S)-3-methyl-2-oxopentanoate + H2O. It participates in amino-acid biosynthesis; L-isoleucine biosynthesis; L-isoleucine from 2-oxobutanoate: step 3/4. Its pathway is amino-acid biosynthesis; L-valine biosynthesis; L-valine from pyruvate: step 3/4. In terms of biological role, functions in the biosynthesis of branched-chain amino acids. Catalyzes the dehydration of (2R,3R)-2,3-dihydroxy-3-methylpentanoate (2,3-dihydroxy-3-methylvalerate) into 2-oxo-3-methylpentanoate (2-oxo-3-methylvalerate) and of (2R)-2,3-dihydroxy-3-methylbutanoate (2,3-dihydroxyisovalerate) into 2-oxo-3-methylbutanoate (2-oxoisovalerate), the penultimate precursor to L-isoleucine and L-valine, respectively. This is Dihydroxy-acid dehydratase from Pseudomonas paraeruginosa (strain DSM 24068 / PA7) (Pseudomonas aeruginosa (strain PA7)).